Reading from the N-terminus, the 414-residue chain is Gamma-glutamyl phosphate reductase (414 aa).

It belongs to the gamma-glutamyl phosphate reductase family.

The protein localises to the cytoplasm. It carries out the reaction L-glutamate 5-semialdehyde + phosphate + NADP(+) = L-glutamyl 5-phosphate + NADPH + H(+). Its pathway is amino-acid biosynthesis; L-proline biosynthesis; L-glutamate 5-semialdehyde from L-glutamate: step 2/2. In terms of biological role, catalyzes the NADPH-dependent reduction of L-glutamate 5-phosphate into L-glutamate 5-semialdehyde and phosphate. The product spontaneously undergoes cyclization to form 1-pyrroline-5-carboxylate. This chain is Gamma-glutamyl phosphate reductase, found in Xanthomonas campestris pv. campestris (strain 8004).